The primary structure comprises 156 residues: Small ribosomal subunit protein uS7 (156 aa).

Belongs to the universal ribosomal protein uS7 family. Part of the 30S ribosomal subunit. Contacts proteins S9 and S11.

Functionally, one of the primary rRNA binding proteins, it binds directly to 16S rRNA where it nucleates assembly of the head domain of the 30S subunit. Is located at the subunit interface close to the decoding center, probably blocks exit of the E-site tRNA. This is Small ribosomal subunit protein uS7 from Solidesulfovibrio magneticus (strain ATCC 700980 / DSM 13731 / RS-1) (Desulfovibrio magneticus).